The following is a 714-amino-acid chain: MEMASAFTLNVRLDNIAIITIDVPGEKMNTLKAEFASQVRAIIKQIRENKELRGVVFVSAKPDNFIAGADINMIGNCKTAQEAEVLARQGQQLMAEIHALPIPVIAAIHGACLGGGLELALACHGRVCTDDPKTVLGLPEVQLGLLPGSGGTQRLPRLIGVSTALEMILTGKQLRAKQAVKLGLVDDVVPHSILLEAAVELAKQDRPSSRPLPVRERILAGPLGRALLFKMVGKKTEHKTQGNYPATERILEVVETGLAQGTSSGYDAEARAFGELAMTPQSQALRNIFFASTDVKKDPGSDAPPAPLNSVGILGGGLMGGGIAYVTACKAGLPVRIKDINPRGINHALKYSWDQLEGKVRRRHLKASERDKQLALISGTTDYCGFAHRDLIIEAVFENLELKQQMVAEVEQNCATHTIFASNTSSLPIGDIAAHAARPEQVIGLHFFSPVEKMPLVEIIPHASTSAQTIATTVKLAKKQGKTPIVVRDKAGFYVNRILAPYINEAIRMLTEGERIEHIDAALVKFGFPVGPIQLLDEVGIDTGTKIMPVLEAAYGERFSAPANVVSSILNDDRKGRKNGRGFYLYGQKGRKSKKQVDPAIYPLIGAQGQGRLSAPQVAERCVMLMLNEAVRCLDEQVIRSVRDGDIGAVFGIGFPPFLGGPFRYIDSLGAGEVVAIMQRLATQYGSRFTPCDRLVEMSERGESFWKTTATDLQ.

The segment at 1–190 (MEMASAFTLN…KLGLVDDVVP (190 aa)) is enoyl-CoA hydratase. Residues 306 to 714 (APLNSVGILG…FWKTTATDLQ (409 aa)) form a 3-hydroxyacyl-CoA dehydrogenase region.

It in the N-terminal section; belongs to the enoyl-CoA hydratase/isomerase family. In the central section; belongs to the 3-hydroxyacyl-CoA dehydrogenase family. As to quaternary structure, heterotetramer of two alpha chains (FadJ) and two beta chains (FadI).

The protein localises to the cytoplasm. It carries out the reaction a (3S)-3-hydroxyacyl-CoA = a (2E)-enoyl-CoA + H2O. It catalyses the reaction a 4-saturated-(3S)-3-hydroxyacyl-CoA = a (3E)-enoyl-CoA + H2O. The catalysed reaction is a (3S)-3-hydroxyacyl-CoA + NAD(+) = a 3-oxoacyl-CoA + NADH + H(+). The enzyme catalyses (3S)-3-hydroxybutanoyl-CoA = (3R)-3-hydroxybutanoyl-CoA. It participates in lipid metabolism; fatty acid beta-oxidation. Functionally, catalyzes the formation of a hydroxyacyl-CoA by addition of water on enoyl-CoA. Also exhibits 3-hydroxyacyl-CoA epimerase and 3-hydroxyacyl-CoA dehydrogenase activities. This chain is Fatty acid oxidation complex subunit alpha, found in Escherichia coli (strain UTI89 / UPEC).